A 313-amino-acid chain; its full sequence is 4-diphosphocytidyl-2-C-methyl-D-erythritol kinase (313 aa).

Residue K27 is part of the active site. ATP is bound at residue 110-120; it reads PIGGGVGGGSS. D152 is a catalytic residue.

Belongs to the GHMP kinase family. IspE subfamily.

The enzyme catalyses 4-CDP-2-C-methyl-D-erythritol + ATP = 4-CDP-2-C-methyl-D-erythritol 2-phosphate + ADP + H(+). It participates in isoprenoid biosynthesis; isopentenyl diphosphate biosynthesis via DXP pathway; isopentenyl diphosphate from 1-deoxy-D-xylulose 5-phosphate: step 3/6. Functionally, catalyzes the phosphorylation of the position 2 hydroxy group of 4-diphosphocytidyl-2C-methyl-D-erythritol. The chain is 4-diphosphocytidyl-2-C-methyl-D-erythritol kinase from Histophilus somni (strain 129Pt) (Haemophilus somnus).